The sequence spans 823 residues: Protein ROOT HAIR DEFECTIVE 3 homolog 2 (823 aa).

The Cytoplasmic segment spans residues 1–688; it reads MEVPISGGGG…EAHRRSNNWL (688 aa). A GB1/RHD3-type G domain is found at 45 to 260; that stretch reads GLSYAVVSIV…IAPGGLAADR (216 aa). 55 to 62 is a GTP binding site; that stretch reads GPQGSGKS. Residues 226–246 are a coiled coil; sequence LSSYEEKENLFKEQVGQLRQR. The chain crosses the membrane as a helical span at residues 689-709; the sequence is PPAWTVLLLAILGYNEFIFLL. Over 710-712 the chain is Lumenal; sequence RNP. The helical transmembrane segment at 713 to 733 threads the bilayer; the sequence is LYLLGLFVAFVVSYAAWLQYD. Residues 734-823 are Cytoplasmic-facing; sequence ITAYFRHGTL…SVGSNSDDES (90 aa). Residues 770–823 form a disordered region; that stretch reads NQKSSSHPPRHRPPLHPQSFRNQAQQQSQAQVQYQAPSSLSSSSSVGSNSDDES. Positions 786–823 are enriched in low complexity; that stretch reads PQSFRNQAQQQSQAQVQYQAPSSLSSSSSVGSNSDDES.

It belongs to the TRAFAC class dynamin-like GTPase superfamily. GB1/RHD3 GTPase family. RHD3 subfamily.

It localises to the endoplasmic reticulum membrane. Functionally, probable GTP-binding protein that may be involved in cell development. The protein is Protein ROOT HAIR DEFECTIVE 3 homolog 2 of Oryza sativa subsp. japonica (Rice).